The sequence spans 347 residues: S-adenosylmethionine:tRNA ribosyltransferase-isomerase (347 aa).

It belongs to the QueA family. Monomer.

The protein resides in the cytoplasm. The enzyme catalyses 7-aminomethyl-7-carbaguanosine(34) in tRNA + S-adenosyl-L-methionine = epoxyqueuosine(34) in tRNA + adenine + L-methionine + 2 H(+). Its pathway is tRNA modification; tRNA-queuosine biosynthesis. In terms of biological role, transfers and isomerizes the ribose moiety from AdoMet to the 7-aminomethyl group of 7-deazaguanine (preQ1-tRNA) to give epoxyqueuosine (oQ-tRNA). The polypeptide is S-adenosylmethionine:tRNA ribosyltransferase-isomerase (Xylella fastidiosa (strain M12)).